Reading from the N-terminus, the 286-residue chain is NADP-dependent dehydrogenase clz5 (286 aa).

Residues Ser49, Leu51, Asp93, Tyr207, Lys211, Ile241, and Gln245 each coordinate NADP(+). Tyr207 (proton acceptor) is an active-site residue. Residue Tyr207 is the Proton donor of the active site. Lys211 acts as the Lowers pKa of active site Tyr in catalysis.

Belongs to the short-chain dehydrogenases/reductases (SDR) family. Homodimer.

It is found in the cytoplasm. The protein localises to the cytosol. It functions in the pathway secondary metabolite biosynthesis. In terms of biological role, NADP-dependent dehydrogenase; part of the gene cluster that mediates the biosynthesis of squalestatin S1 (SQS1, also known as zaragozic acid A), a heavily oxidized fungal polyketide that offers potent cholesterol lowering activity by targeting squalene synthase (SS). SQS1 is composed of a 2,8-dioxobicyclic[3.2.1]octane-3,4,5-tricarboxyclic acid core that is connected to two lipophilic polyketide arms. These initial steps feature the priming of an unusual benzoic acid starter unit onto the highly reducing polyketide synthase clz14, followed by oxaloacetate extension and product release to generate a tricarboxylic acid containing product. The phenylalanine ammonia lyase (PAL) clz10 and the acyl-CoA ligase clz12 are involved in transforming phenylalanine into benzoyl-CoA. The citrate synthase-like protein clz17 is involved in connecting the C-alpha-carbons of the hexaketide chain and oxaloacetate to afford the tricarboxylic acid unit. The potential hydrolytic enzymes, clz11 and clz13, are in close proximity to pks2 and may participate in product release. On the other side, the tetraketide arm is synthesized by a the squalestatin tetraketide synthase clz2 and enzymatically esterified to the core in the last biosynthetic step, by the acetyltransferase clz6. The biosynthesis of the tetraketide must involve 3 rounds of chain extension. After the first and second rounds methyl-transfer occurs, and in all rounds of extension the ketoreductase and dehydratase are active. The enoyl reductase and C-MeT of clz2 are not active in the final round of extension. The acetyltransferase clz6 appears to have a broad substrate selectivity for its acyl CoA substrate, allowing the in vitro synthesis of novel squalestatins. The biosynthesis of SQS1 requires several oxidative steps likely performed by oxidoreductases clz3, clz15 and clz16. Finally, in support of the identification of the cluster as being responsible for SQS1 production, the cluster contains a gene encoding a putative squalene synthase (SS) clz20, suggesting a likely mechanism for self-resistance. The polypeptide is NADP-dependent dehydrogenase clz5 (Cochliobolus lunatus (Filamentous fungus)).